The chain runs to 184 residues: Probable chemoreceptor glutamine deamidase CheD (184 aa).

Belongs to the CheD family.

It catalyses the reaction L-glutaminyl-[protein] + H2O = L-glutamyl-[protein] + NH4(+). Its function is as follows. Probably deamidates glutamine residues to glutamate on methyl-accepting chemotaxis receptors (MCPs), playing an important role in chemotaxis. The sequence is that of Probable chemoreceptor glutamine deamidase CheD from Rhizobium johnstonii (strain DSM 114642 / LMG 32736 / 3841) (Rhizobium leguminosarum bv. viciae).